The primary structure comprises 412 residues: Putative competence-damage inducible protein (412 aa).

It belongs to the CinA family.

This Clostridium perfringens (strain SM101 / Type A) protein is Putative competence-damage inducible protein.